The sequence spans 40 residues: MGTRCSLTDTRSATYARSGLLVMKTLKRGLQNGNPQEVNQ.

In Escherichia phage T7 (Bacteriophage T7), this protein is Protein 4.1.